The following is a 1097-amino-acid chain: DNA-directed RNA polymerase subunit beta (1097 aa).

The segment at Gln1072–Asp1097 is disordered.

This sequence belongs to the RNA polymerase beta chain family. In terms of assembly, in cyanobacteria the RNAP catalytic core is composed of 2 alpha, 1 beta, 1 beta', 1 gamma and 1 omega subunit. When a sigma factor is associated with the core the holoenzyme is formed, which can initiate transcription.

It catalyses the reaction RNA(n) + a ribonucleoside 5'-triphosphate = RNA(n+1) + diphosphate. Its function is as follows. DNA-dependent RNA polymerase catalyzes the transcription of DNA into RNA using the four ribonucleoside triphosphates as substrates. This chain is DNA-directed RNA polymerase subunit beta, found in Synechococcus sp. (strain CC9605).